Reading from the N-terminus, the 171-residue chain is Peptide deformylase (171 aa).

Fe cation contacts are provided by C91 and H133. E134 is an active-site residue. Residue H137 participates in Fe cation binding.

It belongs to the polypeptide deformylase family. Requires Fe(2+) as cofactor.

It catalyses the reaction N-terminal N-formyl-L-methionyl-[peptide] + H2O = N-terminal L-methionyl-[peptide] + formate. Functionally, removes the formyl group from the N-terminal Met of newly synthesized proteins. Requires at least a dipeptide for an efficient rate of reaction. N-terminal L-methionine is a prerequisite for activity but the enzyme has broad specificity at other positions. This Cronobacter sakazakii (strain ATCC BAA-894) (Enterobacter sakazakii) protein is Peptide deformylase.